Consider the following 430-residue polypeptide: Cell division protein FtsZ (430 aa).

Residues 76–80 (GGGCN), 163–165 (GTG), Glu194, Arg198, and Asp242 each bind GTP. Residues 374–418 (KEKPQAKTSSKPVLSGPPAGVETVPSTTTPEDPLGEIPMAPELDI) are disordered.

It belongs to the FtsZ family. In terms of assembly, homodimer. Polymerizes to form a dynamic ring structure in a strictly GTP-dependent manner. Interacts directly with several other division proteins.

It localises to the cytoplasm. Its function is as follows. Essential cell division protein that forms a contractile ring structure (Z ring) at the future cell division site. The regulation of the ring assembly controls the timing and the location of cell division. One of the functions of the FtsZ ring is to recruit other cell division proteins to the septum to produce a new cell wall between the dividing cells. Binds GTP and shows GTPase activity. This Synechocystis sp. (strain ATCC 27184 / PCC 6803 / Kazusa) protein is Cell division protein FtsZ.